The primary structure comprises 176 residues: RNA 2',3'-cyclic phosphodiesterase (176 aa).

The active-site Proton donor is the His-28. 2 short sequence motifs (HXTX) span residues 28 to 31 and 113 to 116; these read HITL and HVTL. His-113 acts as the Proton acceptor in catalysis.

It belongs to the 2H phosphoesterase superfamily. ThpR family.

It carries out the reaction a 3'-end 2',3'-cyclophospho-ribonucleotide-RNA + H2O = a 3'-end 2'-phospho-ribonucleotide-RNA + H(+). Its function is as follows. Hydrolyzes RNA 2',3'-cyclic phosphodiester to an RNA 2'-phosphomonoester. In Aeropyrum pernix (strain ATCC 700893 / DSM 11879 / JCM 9820 / NBRC 100138 / K1), this protein is RNA 2',3'-cyclic phosphodiesterase.